Consider the following 414-residue polypeptide: Riboflavin biosynthesis protein RibBA (414 aa).

The interval 1–204 (MTRFDTIERA…IADMIAWRRK (204 aa)) is DHBP synthase. Residues 28-29 (RE), Asp-33, 141-145 (RPGHT), and Glu-165 contribute to the D-ribulose 5-phosphate site. Glu-29 contacts Mg(2+). His-144 is a Mg(2+) binding site. Residues 205-414 (HEKQVVRVAE…DDLDLGETAQ (210 aa)) form a GTP cyclohydrolase II region. 255–259 (RVHSE) serves as a coordination point for GTP. Positions 260, 271, and 273 each coordinate Zn(2+). GTP contacts are provided by residues Gln-276, 299-301 (EGR), and Thr-321. Asp-333 acts as the Proton acceptor; for GTP cyclohydrolase activity in catalysis. The active-site Nucleophile; for GTP cyclohydrolase activity is the Arg-335. Thr-356 and Lys-361 together coordinate GTP.

The protein in the N-terminal section; belongs to the DHBP synthase family. This sequence in the C-terminal section; belongs to the GTP cyclohydrolase II family. Requires Mg(2+) as cofactor. Mn(2+) is required as a cofactor. Zn(2+) serves as cofactor.

The catalysed reaction is D-ribulose 5-phosphate = (2S)-2-hydroxy-3-oxobutyl phosphate + formate + H(+). It carries out the reaction GTP + 4 H2O = 2,5-diamino-6-hydroxy-4-(5-phosphoribosylamino)-pyrimidine + formate + 2 phosphate + 3 H(+). Its pathway is cofactor biosynthesis; riboflavin biosynthesis; 2-hydroxy-3-oxobutyl phosphate from D-ribulose 5-phosphate: step 1/1. The protein operates within cofactor biosynthesis; riboflavin biosynthesis; 5-amino-6-(D-ribitylamino)uracil from GTP: step 1/4. Catalyzes the conversion of D-ribulose 5-phosphate to formate and 3,4-dihydroxy-2-butanone 4-phosphate. Its function is as follows. Catalyzes the conversion of GTP to 2,5-diamino-6-ribosylamino-4(3H)-pyrimidinone 5'-phosphate (DARP), formate and pyrophosphate. In Nocardia farcinica (strain IFM 10152), this protein is Riboflavin biosynthesis protein RibBA.